A 305-amino-acid polypeptide reads, in one-letter code: Taste receptor type 2 member 13 (305 aa).

Residues 1-7 (MGSNVYG) are Extracellular-facing. A helical transmembrane segment spans residues 8-28 (ILTMVMIAEFVFGNMSNGFIV). Residues 29–43 (LINCIDWVRKGTLSS) lie on the Cytoplasmic side of the membrane. A helical membrane pass occupies residues 44–64 (IGWILLFLAISRMVLIWEMLI). Topologically, residues 65–88 (TWIKYMKYSFSFVTGTELRGIMFT) are extracellular. Residues 89-109 (WVISNHFSLWLATILSIFYLL) form a helical membrane-spanning segment. Topologically, residues 110–128 (KIASFSKPVFLYLKWREKK) are cytoplasmic. A helical transmembrane segment spans residues 129 to 149 (VLLIVLLGNLIFLMLNILQIN). Over 150–182 (KHIEHWMYQYERNITWSSRVSDFAGFSNLVLLE) the chain is Extracellular. Asn162 is a glycosylation site (N-linked (GlcNAc...) asparagine). The chain crosses the membrane as a helical span at residues 183–203 (MIVFSVTPFTVALVSFILLIF). The Cytoplasmic segment spans residues 204–232 (SLWKHLQKMHLNSRGERDPSTKAHVNALR). A helical transmembrane segment spans residues 233 to 253 (IMVSFLLLYATYFISFFLSLI). The Extracellular portion of the chain corresponds to 254-262 (PMAHKTRLG). Residues 263–283 (LMFSITVGLFYPSSHSFILIL) traverse the membrane as a helical segment. The Cytoplasmic segment spans residues 284–305 (GHSNLRQASLWVMTYLKCGQKH).

It belongs to the G-protein coupled receptor T2R family.

Its subcellular location is the cell membrane. Receptor that may play a role in the perception of bitterness and is gustducin-linked. May play a role in sensing the chemical composition of the gastrointestinal content. The activity of this receptor may stimulate alpha gustducin, mediate PLC-beta-2 activation and lead to the gating of TRPM5. This chain is Taste receptor type 2 member 13, found in Mus musculus (Mouse).